The primary structure comprises 263 residues: Ribonuclease 3 (263 aa).

The interval 1–23 (MPHSKNQRKHRHHSHSERRRQPK) is disordered. One can recognise an RNase III domain in the interval 35 to 164 (FDELLRTLNL…FVGALYLDQG (130 aa)). Residue Glu77 coordinates Mg(2+). Residue Asp81 is part of the active site. Asp150 and Glu153 together coordinate Mg(2+). Glu153 is a catalytic residue. The DRBM domain maps to 190–259 (DFKSQLQEFI…AQQALITLSQ (70 aa)).

It belongs to the ribonuclease III family. In terms of assembly, homodimer. Mg(2+) is required as a cofactor.

The protein resides in the cytoplasm. It carries out the reaction Endonucleolytic cleavage to 5'-phosphomonoester.. Functionally, digests double-stranded RNA. Involved in the processing of primary rRNA transcript to yield the immediate precursors to the large and small rRNAs (23S and 16S). Processes some mRNAs, and tRNAs when they are encoded in the rRNA operon. Processes pre-crRNA and tracrRNA of type II CRISPR loci if present in the organism. The chain is Ribonuclease 3 from Halalkalibacterium halodurans (strain ATCC BAA-125 / DSM 18197 / FERM 7344 / JCM 9153 / C-125) (Bacillus halodurans).